A 261-amino-acid polypeptide reads, in one-letter code: Leukocyte receptor cluster member 1 homolog (261 aa).

Residues 1–261 (MNILPKKSWH…PRQQNPTPAH (261 aa)) form a disordered region. The span at 12-38 (RNKDNVARVRRDEAQAREEEKERERRV) shows a compositional bias: basic and acidic residues. The stretch at 16–46 (NVARVRRDEAQAREEEKERERRVLLAQQEAR) forms a coiled coil. Phosphoserine is present on Ser-59. Composition is skewed to basic and acidic residues over residues 78–109 (LFRELLEERKGVPRGNKEHEEEKRREKERQEK), 147–163 (PDEKIKNRLDPLKEMQK), and 171–211 (SSES…RARA). Residues 192 to 222 (SLEKLRAERLQREAAERARAEALLARVQGQV) are a coiled coil. Residues 212–228 (EALLARVQGQVSQQGQV) are compositionally biased toward low complexity. At Ser-242 the chain carries Phosphoserine.

The polypeptide is Leukocyte receptor cluster member 1 homolog (Leng1) (Mus musculus (Mouse)).